The chain runs to 155 residues: Endoribonuclease YbeY (155 aa).

Zn(2+) contacts are provided by His114, His118, and His124.

It belongs to the endoribonuclease YbeY family. Zn(2+) serves as cofactor.

The protein localises to the cytoplasm. In terms of biological role, single strand-specific metallo-endoribonuclease involved in late-stage 70S ribosome quality control and in maturation of the 3' terminus of the 16S rRNA. The polypeptide is Endoribonuclease YbeY (Enterobacter sp. (strain 638)).